The sequence spans 311 residues: Aquaporin NIP3-1 (311 aa).

The tract at residues 1–34 (MEMAAPNGGGAAGMSSPVNGASAPATPGTPAPLF) is disordered. Low complexity predominate over residues 20 to 34 (GASAPATPGTPAPLF). 2 helical membrane passes run 85-105 (LGAE…APIV) and 111-131 (GAIS…TIIL). The NPA 1 signature appears at 142-144 (NPS). 3 helical membrane-spanning segments follow: residues 158-178 (LQVP…GFAL), 202-222 (AFFT…AVAT), and 226-246 (AVGE…ILIA). The short motif at 255 to 257 (NPV) is the NPA 2 element. A helical membrane pass occupies residues 273–293 (WIYLIAPTLGAVAGAGVYTAV).

Belongs to the MIP/aquaporin (TC 1.A.8) family. NIP (TC 1.A.8.12) subfamily. In terms of tissue distribution, expressed in roots and leaves.

The protein resides in the membrane. Aquaporins facilitate the transport of water and small neutral solutes across cell membranes. This Oryza sativa subsp. japonica (Rice) protein is Aquaporin NIP3-1 (NIP3-1).